A 530-amino-acid chain; its full sequence is MHQRILILDYGSQVTQLIARRVREAGVYSEIHPGDVDDAFIREQAAQGLKGVILSGSHASAYEEGSMRVPAAVFELGLPVLGICYGMQAMALQLGGKVSFSDHREFGYAEIVAQGGTKLLSGLADFQNDAGQDVLKVWMSHGDKVTELPPGFSLMASTPSCPIAAMADESRGYYAVQFHPEVTHTVQGKALFSRFVREICGCEGDWNMPDYISEAVARIREQVGNDEVILGLSGGVDSSVAAALIHRAIGDQLTCVFVDHGLLRLNEGLQVMQTFSENMGVKIIHVDATEQFMGKLAGVADPEAKRKIIGREFVEVFQTEAGKLQGAKWLAQGTIYPDVIESAGAKTGKAAAIKSHHNVGGLPETLNLQLLEPLRELFKDEVRELGVALGLPPQMVYRHPFPGPGLGVRILGEVKHEYAELLRRADAIFIEELRNTKDPASDLSWYDLTSQAFAVFLPVKSVGVMGDGRTYEYVVALRAVQTFDFMTADWAPLPHPLLAKVSSRIINEVRGINRVVYDVSSKPPATIEWE.

Residues 4–205 enclose the Glutamine amidotransferase type-1 domain; sequence RILILDYGSQ…VREICGCEGD (202 aa). The active-site Nucleophile is the C84. Residues H179 and E181 contribute to the active site. The GMPS ATP-PPase domain occupies 206-398; that stretch reads WNMPDYISEA…LGLPPQMVYR (193 aa). Residue 233 to 239 participates in ATP binding; the sequence is SGGVDSS.

In terms of assembly, homodimer.

It carries out the reaction XMP + L-glutamine + ATP + H2O = GMP + L-glutamate + AMP + diphosphate + 2 H(+). It participates in purine metabolism; GMP biosynthesis; GMP from XMP (L-Gln route): step 1/1. Catalyzes the synthesis of GMP from XMP. This is GMP synthase [glutamine-hydrolyzing] from Bordetella avium (strain 197N).